Consider the following 456-residue polypeptide: MDKRFAVILAAGKGTRMKSKLYKVLHPVCGKPMVEHVADEALKLSLAKLVTIVGHGAEDVKKQLGQKSDYALQAEQLGTAHAVKQAKPFLHGEKGVTIVICGDTPLLTAETMEAMLNEHTDKGAKATVLTAVADDPAGYGRIIRSEDGAVQKIVEHKDASEQERLVKEINTGTYCFDNEALFRVIEQVSNENAQGEYYLPDVIEILKDEGETVAAYQTGNFQETLGVNDRVALSQAEMYMKERINKRHMQNGVTLIDPMNTYISPDARIGQDTVIYPGTVLKGQAEIGDECVIGPHTEIEDSSIGSRTVIKQSVVNRSKVGNDVNIGPFAHIRPDSAIGNEVKIGNFVEIKKTQFGDRSKASHLSYIGDAEVGTDVNLGCGSITVNYDGKKKYLTKIEDGAFIGCNSNLVAPVTVGEGAYVAAGSTVTEDVPGEALAIARARQVNKEDYVKNIHKK.

A pyrophosphorylase region spans residues 1–230 (MDKRFAVILA…FQETLGVNDR (230 aa)). Residues 9-12 (LAAG), lysine 23, glutamine 73, and 78-79 (GT) each bind UDP-N-acetyl-alpha-D-glucosamine. Residue aspartate 103 coordinates Mg(2+). 4 residues coordinate UDP-N-acetyl-alpha-D-glucosamine: glycine 140, glutamate 155, asparagine 170, and asparagine 228. A Mg(2+)-binding site is contributed by asparagine 228. The segment at 231–251 (VALSQAEMYMKERINKRHMQN) is linker. The segment at 252-456 (GVTLIDPMNT…EDYVKNIHKK (205 aa)) is N-acetyltransferase. Residues arginine 333 and lysine 351 each coordinate UDP-N-acetyl-alpha-D-glucosamine. Histidine 363 functions as the Proton acceptor in the catalytic mechanism. UDP-N-acetyl-alpha-D-glucosamine-binding residues include tyrosine 366 and asparagine 377. Residues 386–387 (NY), alanine 423, and arginine 440 contribute to the acetyl-CoA site.

The protein in the N-terminal section; belongs to the N-acetylglucosamine-1-phosphate uridyltransferase family. This sequence in the C-terminal section; belongs to the transferase hexapeptide repeat family. Homotrimer. Mg(2+) serves as cofactor.

The protein resides in the cytoplasm. It carries out the reaction alpha-D-glucosamine 1-phosphate + acetyl-CoA = N-acetyl-alpha-D-glucosamine 1-phosphate + CoA + H(+). It catalyses the reaction N-acetyl-alpha-D-glucosamine 1-phosphate + UTP + H(+) = UDP-N-acetyl-alpha-D-glucosamine + diphosphate. The protein operates within nucleotide-sugar biosynthesis; UDP-N-acetyl-alpha-D-glucosamine biosynthesis; N-acetyl-alpha-D-glucosamine 1-phosphate from alpha-D-glucosamine 6-phosphate (route II): step 2/2. It participates in nucleotide-sugar biosynthesis; UDP-N-acetyl-alpha-D-glucosamine biosynthesis; UDP-N-acetyl-alpha-D-glucosamine from N-acetyl-alpha-D-glucosamine 1-phosphate: step 1/1. Its pathway is bacterial outer membrane biogenesis; LPS lipid A biosynthesis. In terms of biological role, catalyzes the last two sequential reactions in the de novo biosynthetic pathway for UDP-N-acetylglucosamine (UDP-GlcNAc). The C-terminal domain catalyzes the transfer of acetyl group from acetyl coenzyme A to glucosamine-1-phosphate (GlcN-1-P) to produce N-acetylglucosamine-1-phosphate (GlcNAc-1-P), which is converted into UDP-GlcNAc by the transfer of uridine 5-monophosphate (from uridine 5-triphosphate), a reaction catalyzed by the N-terminal domain. The sequence is that of Bifunctional protein GlmU from Bacillus velezensis (strain DSM 23117 / BGSC 10A6 / LMG 26770 / FZB42) (Bacillus amyloliquefaciens subsp. plantarum).